Reading from the N-terminus, the 61-residue chain is Three-finger hemachatoxin (61 aa).

4 disulfide bridges follow: cysteine 3/cysteine 22, cysteine 15/cysteine 39, cysteine 43/cysteine 54, and cysteine 55/cysteine 60.

The protein belongs to the three-finger toxin family. Short-chain subfamily. Type IB cytotoxin sub-subfamily. Expressed by the venom gland.

Its subcellular location is the secreted. In terms of biological role, this protein lyses red blood cells and has cardiotoxic and hypotensive activities. This Hemachatus haemachatus (Rinkhals) protein is Three-finger hemachatoxin.